The sequence spans 596 residues: MPVCKNCHGTEFERDLSNANNDLVCKACGVVSEDNPIVSEVTFGETSAGAAVVQGSFIGAGQSHAAFGGSSALESREATLNNARRKLRAVSYALHIPEYITDAAFQWYKLALANNFVQGRRSQNVIASCLYVACRKEKTHHMLIDFSSRLQVSVYSIGATFLKMVKKLHITELPLADPSLFIQHFAEKLDLADKKIKVVKDAVKLAQRMSKDWMFEGRRPAGIAGACILLACRMNNLRRTHTEIVAVSHVAEETLQQRLNEFKNTKAAKLSVQKFRENDVEDGEARPPSFVKNRKKERKIKDSLDKEEMFQTSEEALNKNPILTQVLGEQELSSKEVLFYLKQFSERRARVVERIKATNGIDGENIYHEGSENETRKRKLSEVSIQNEHVEGEDKETEGTEEKVKKVKTKTSEEKKENESGHFQDAIDGYSLETDPYCPRNLHLLPTTDTYLSKVSDDPDNLEDVDDEELNAHLLNEEASKLKERIWIGLNADFLLEQESKRLKQEADIATGNTSVKKKRTRRRNNTRSDEPTKTVDAAAAIGLMSDLQDKSGLHAALKAAEESGDFTTADSVKNMLQKASFSKKINYDAIDGLFR.

A TFIIB-type zinc finger spans residues 1–33; it reads MPVCKNCHGTEFERDLSNANNDLVCKACGVVSE. The Zn(2+) site is built by C4, C7, C25, and C28. 2 tandem repeats follow at residues 90–166 and 185–264. 2 disordered regions span residues 363–421 and 509–534; these read GENI…NESG and IATGNTSVKKKRTRRRNNTRSDEPTK. Over residues 365–375 the composition is skewed to basic and acidic residues; sequence NIYHEGSENET. Phosphoserine occurs at positions 381 and 384. The segment covering 388–421 has biased composition (basic and acidic residues); sequence EHVEGEDKETEGTEEKVKKVKTKTSEEKKENESG. Residues 516-526 are compositionally biased toward basic residues; the sequence is VKKKRTRRRNN.

Belongs to the TFIIB family. In terms of assembly, TFIIIB comprises the TATA-binding protein (TBP), the B-related factor (BRF) and the B' component (TFC5).

The protein resides in the nucleus. In terms of biological role, general activator of RNA polymerase III transcription. Interacts with TBP. Binds to Pol III subunit C34 and to the TAU135 component of TFIIIC. This chain is Transcription factor IIIB 70 kDa subunit (BRF1), found in Saccharomyces cerevisiae (strain ATCC 204508 / S288c) (Baker's yeast).